A 184-amino-acid polypeptide reads, in one-letter code: Small ribosomal subunit protein uS4 (184 aa).

In terms of domain architecture, S4 RNA-binding spans 108-172; sequence RRLQTQVHRL…SPMTKESHPE (65 aa). A disordered region spans residues 163–184; sequence SPMTKESHPERPAQIAASVVEE.

This sequence belongs to the universal ribosomal protein uS4 family. Part of the 30S ribosomal subunit. Contacts protein S5. The interaction surface between S4 and S5 is involved in control of translational fidelity.

Functionally, one of the primary rRNA binding proteins, it binds directly to 16S rRNA where it nucleates assembly of the body of the 30S subunit. In terms of biological role, with S5 and S12 plays an important role in translational accuracy. This chain is Small ribosomal subunit protein uS4, found in Methanococcoides burtonii (strain DSM 6242 / NBRC 107633 / OCM 468 / ACE-M).